A 224-amino-acid chain; its full sequence is Orotate phosphoribosyltransferase (224 aa).

Residues Lys26, 73 to 74 (YK), Arg100, Lys101, Lys104, His106, and 127 to 135 (EDVTTSGKS) contribute to the 5-phospho-alpha-D-ribose 1-diphosphate site. Orotate contacts are provided by Thr131 and Arg160.

This sequence belongs to the purine/pyrimidine phosphoribosyltransferase family. PyrE subfamily. In terms of assembly, homodimer. Mg(2+) is required as a cofactor.

The catalysed reaction is orotidine 5'-phosphate + diphosphate = orotate + 5-phospho-alpha-D-ribose 1-diphosphate. The protein operates within pyrimidine metabolism; UMP biosynthesis via de novo pathway; UMP from orotate: step 1/2. Its function is as follows. Catalyzes the transfer of a ribosyl phosphate group from 5-phosphoribose 1-diphosphate to orotate, leading to the formation of orotidine monophosphate (OMP). In Clostridium botulinum (strain Eklund 17B / Type B), this protein is Orotate phosphoribosyltransferase.